Reading from the N-terminus, the 451-residue chain is UDP-N-acetylmuramoylalanine--D-glutamate ligase (451 aa).

119 to 125 (GSNGKTT) lines the ATP pocket.

It belongs to the MurCDEF family.

Its subcellular location is the cytoplasm. It carries out the reaction UDP-N-acetyl-alpha-D-muramoyl-L-alanine + D-glutamate + ATP = UDP-N-acetyl-alpha-D-muramoyl-L-alanyl-D-glutamate + ADP + phosphate + H(+). Its pathway is cell wall biogenesis; peptidoglycan biosynthesis. In terms of biological role, cell wall formation. Catalyzes the addition of glutamate to the nucleotide precursor UDP-N-acetylmuramoyl-L-alanine (UMA). This Geobacillus sp. (strain WCH70) protein is UDP-N-acetylmuramoylalanine--D-glutamate ligase.